The primary structure comprises 1040 residues: Multidrug resistance protein MdtB (1040 aa).

Transmembrane regions (helical) follow at residues 16 to 36, 347 to 367, 369 to 389, 396 to 416, 440 to 460, 472 to 492, 537 to 557, 863 to 883, 888 to 908, 911 to 931, 968 to 988, and 998 to 1018; these read FILR…AGII, LMLA…NIPA, IIPA…MVFL, LTLM…IVVI, IGFT…PLLF, FAVT…TLTP, WLTL…WIFI, LGST…VLGV, FIHP…ALLA, IAGA…IGIV, ILMT…STGV, and IGMV…TPVI.

The protein belongs to the resistance-nodulation-cell division (RND) (TC 2.A.6) family. MdtB subfamily. In terms of assembly, part of a tripartite efflux system composed of MdtA, MdtB and MdtC. MdtB forms a heteromultimer with MdtC.

It is found in the cell inner membrane. This chain is Multidrug resistance protein MdtB, found in Cronobacter sakazakii (strain ATCC BAA-894) (Enterobacter sakazakii).